Consider the following 256-residue polypeptide: Thiazole synthase (256 aa).

The active-site Schiff-base intermediate with DXP is K98. Residues G159, 185 to 186 (AG), and 207 to 208 (NT) each bind 1-deoxy-D-xylulose 5-phosphate.

Belongs to the ThiG family. Homotetramer. Forms heterodimers with either ThiH or ThiS.

The protein resides in the cytoplasm. The catalysed reaction is [ThiS sulfur-carrier protein]-C-terminal-Gly-aminoethanethioate + 2-iminoacetate + 1-deoxy-D-xylulose 5-phosphate = [ThiS sulfur-carrier protein]-C-terminal Gly-Gly + 2-[(2R,5Z)-2-carboxy-4-methylthiazol-5(2H)-ylidene]ethyl phosphate + 2 H2O + H(+). Its pathway is cofactor biosynthesis; thiamine diphosphate biosynthesis. Functionally, catalyzes the rearrangement of 1-deoxy-D-xylulose 5-phosphate (DXP) to produce the thiazole phosphate moiety of thiamine. Sulfur is provided by the thiocarboxylate moiety of the carrier protein ThiS. In vitro, sulfur can be provided by H(2)S. In Aliivibrio fischeri (strain ATCC 700601 / ES114) (Vibrio fischeri), this protein is Thiazole synthase.